The sequence spans 335 residues: Fructose-1,6-bisphosphatase class 1 (335 aa).

Residues E92, D114, L116, and D117 each coordinate Mg(2+). Residues 117-120 (DGSS), N209, and K275 each bind substrate. E281 lines the Mg(2+) pocket.

It belongs to the FBPase class 1 family. As to quaternary structure, homotetramer. Mg(2+) is required as a cofactor.

The protein localises to the cytoplasm. It carries out the reaction beta-D-fructose 1,6-bisphosphate + H2O = beta-D-fructose 6-phosphate + phosphate. Its pathway is carbohydrate biosynthesis; gluconeogenesis. This chain is Fructose-1,6-bisphosphatase class 1, found in Delftia acidovorans (strain DSM 14801 / SPH-1).